The sequence spans 256 residues: Agamous-like MADS-box protein AGL18 (256 aa).

One can recognise an MADS-box domain in the interval Met-1–Cys-61. Positions Asn-94–Gly-184 constitute a K-box domain. The tract at residues Glu-179–Gly-232 is disordered. A compositionally biased stretch (acidic residues) spans Pro-199–Asn-215. A compositionally biased stretch (polar residues) spans Thr-222–Gly-232.

Mostly expressed in pollen, roots, flowers and siliques, and to a lower extent, in stems and leaves. Expressed in the endosperm and in developing male and female gametophytes. Also present in seedlings.

It is found in the nucleus. Its function is as follows. Probable transcription factor involved in the negative regulation of flowering, probably through the photoperiodic pathway. Prevents premature flowering. Downstream regulator of a subset of the MIKC* MADS-controlled genes required during pollen maturation. This Arabidopsis thaliana (Mouse-ear cress) protein is Agamous-like MADS-box protein AGL18 (AGL18).